A 171-amino-acid polypeptide reads, in one-letter code: Protein hunchback (171 aa).

2 disordered regions span residues 14 to 93 (PMSH…PMQI) and 124 to 171 (SNDK…KYMA). Residues 17–31 (HHHHHSHHSHGHHHS) are compositionally biased toward basic residues. 2 stretches are compositionally biased toward low complexity: residues 32-42 (NSNSNASSPRQ) and 52-80 (SSSN…DTPL). Residues 152–171 (EPEKDHDLMSNSSEDMKYMA) show a composition bias toward basic and acidic residues.

This sequence belongs to the hunchback C2H2-type zinc-finger protein family.

The protein resides in the nucleus. Functionally, gap class segmentation protein that controls development of head structures. The sequence is that of Protein hunchback (hb) from Scaptomyza albovittata (Fruit fly).